The chain runs to 556 residues: Urocanate hydratase (556 aa).

NAD(+) is bound by residues 52–53 (GG), Gln-130, 176–178 (GMG), Glu-196, Arg-201, 242–243 (NA), 263–267 (QTSAH), 273–274 (YL), and Tyr-322. Cys-410 is an active-site residue. Position 492 (Gly-492) interacts with NAD(+).

The protein belongs to the urocanase family. It depends on NAD(+) as a cofactor.

Its subcellular location is the cytoplasm. It catalyses the reaction 4-imidazolone-5-propanoate = trans-urocanate + H2O. Its pathway is amino-acid degradation; L-histidine degradation into L-glutamate; N-formimidoyl-L-glutamate from L-histidine: step 2/3. Catalyzes the conversion of urocanate to 4-imidazolone-5-propionate. The polypeptide is Urocanate hydratase (Bradyrhizobium sp. (strain ORS 278)).